The sequence spans 216 residues: UPF0548 protein (216 aa).

Belongs to the UPF0548 family.

The chain is UPF0548 protein from Dictyostelium discoideum (Social amoeba).